We begin with the raw amino-acid sequence, 358 residues long: Protein-glutamate methylesterase/protein-glutamine glutaminase 1 (358 aa).

Residues 8 to 125 (RVLIVDDSAV…ARGLEGYAEE (118 aa)) form the Response regulatory domain. 4-aspartylphosphate is present on aspartate 59. One can recognise a CheB-type methylesterase domain in the interval 157–352 (PVPGSALRFR…LERVAERLIA (196 aa)). Catalysis depends on residues serine 177, histidine 203, and aspartate 299.

Belongs to the CheB family. Post-translationally, phosphorylated by CheA. Phosphorylation of the N-terminal regulatory domain activates the methylesterase activity.

It localises to the cytoplasm. It carries out the reaction [protein]-L-glutamate 5-O-methyl ester + H2O = L-glutamyl-[protein] + methanol + H(+). The enzyme catalyses L-glutaminyl-[protein] + H2O = L-glutamyl-[protein] + NH4(+). In terms of biological role, involved in chemotaxis. Part of a chemotaxis signal transduction system that modulates chemotaxis in response to various stimuli. Catalyzes the demethylation of specific methylglutamate residues introduced into the chemoreceptors (methyl-accepting chemotaxis proteins or MCP) by CheR. Also mediates the irreversible deamidation of specific glutamine residues to glutamic acid. The sequence is that of Protein-glutamate methylesterase/protein-glutamine glutaminase 1 from Xanthomonas campestris pv. campestris (strain ATCC 33913 / DSM 3586 / NCPPB 528 / LMG 568 / P 25).